Reading from the N-terminus, the 259-residue chain is MPDITDLFAQRATLRRSTSLLTAFRFEQSAPERFYGTLAQDTVHLITDLWQQAEGVALRGRTVLDVGGGPGYFASAFADAGARYIGVEPDPREMHAAPQGHRGIQDPRTTYLRASGMALPLADNSVDICLSSNVAEHVPQPWRLGEEMLRVTRPGGLAILSYTVWLGPFGGHEMGLTHYFGGARAARWYTRKHGHPPKNNYGSSLFPVSVRDGLRWARDTGTLTAAFPRYHPKWAWWITKIPALREVLVSNLVLVLRPR.

The protein belongs to the methyltransferase superfamily.

This is an uncharacterized protein from Mycobacteroides abscessus (strain ATCC 19977 / DSM 44196 / CCUG 20993 / CIP 104536 / JCM 13569 / NCTC 13031 / TMC 1543 / L948) (Mycobacterium abscessus).